We begin with the raw amino-acid sequence, 177 residues long: Peptidyl-tRNA hydrolase (177 aa).

Tyrosine 18 contributes to the tRNA binding site. Histidine 23 serves as the catalytic Proton acceptor. TRNA contacts are provided by phenylalanine 65, asparagine 67, and asparagine 113.

This sequence belongs to the PTH family. Monomer.

It is found in the cytoplasm. The catalysed reaction is an N-acyl-L-alpha-aminoacyl-tRNA + H2O = an N-acyl-L-amino acid + a tRNA + H(+). Its function is as follows. Hydrolyzes ribosome-free peptidyl-tRNAs (with 1 or more amino acids incorporated), which drop off the ribosome during protein synthesis, or as a result of ribosome stalling. Functionally, catalyzes the release of premature peptidyl moieties from peptidyl-tRNA molecules trapped in stalled 50S ribosomal subunits, and thus maintains levels of free tRNAs and 50S ribosomes. The polypeptide is Peptidyl-tRNA hydrolase (Corynebacterium efficiens (strain DSM 44549 / YS-314 / AJ 12310 / JCM 11189 / NBRC 100395)).